The following is a 285-amino-acid chain: Neuralized-like protein 2 (285 aa).

A disordered region spans residues 1-28; sequence MADPSEHVGLGGPRSPARPEPPPTRFHQ. Residues 23 to 244 enclose the NHR domain; the sequence is PTRFHQVHGA…STKSVRLVQL (222 aa). Positions 250-285 constitute an SOCS box domain; that stretch reads SLQTLCRLVIHKRVVHRLAIDVLHLPKGLKDFCKYE.

As to quaternary structure, probable component the ECS(NEURL2) E3 ubiquitin-protein ligase complex consisting of ELOB/Elongin B, ELOC/Elongin C, CUL5, RBX1 and NEURL2. Interacts with CTNNB1. As to expression, expressed specifically in skeletal and cardiac muscles.

Its subcellular location is the cytoplasm. It participates in protein modification; protein ubiquitination. Functionally, plays an important role in the process of myofiber differentiation and maturation. Probable substrate-recognition component of a SCF-like ECS (Elongin BC-CUL2/5-SOCS-box protein) E3 ubiquitin-protein ligase complex, which mediates the ubiquitination of proteins. Probably contributes to catalysis through recognition and positioning of the substrate and the ubiquitin-conjugating enzyme. During myogenesis, controls the ubiquitination and degradation of the specific pool of CTNNB1/beta-catenin located at the sarcolemma. The protein is Neuralized-like protein 2 (Neurl2) of Mus musculus (Mouse).